We begin with the raw amino-acid sequence, 263 residues long: Phosphoinositide-3-kinase-interacting protein 1 (263 aa).

The N-terminal stretch at 1–18 (MFGRLYFMLLLSVGLVDC) is a signal peptide. The Extracellular segment spans residues 19–163 (LSVVKDCITN…SGPKKKKDLG (145 aa)). Residues 24-99 (DCITNNGEDY…KKEACDIRIC (76 aa)) enclose the Kringle domain. Cystine bridges form between Cys25-Cys99, Cys46-Cys80, and Cys69-Cys94. Residue Asn103 is glycosylated (N-linked (GlcNAc...) asparagine). The chain crosses the membrane as a helical span at residues 164 to 184 (TLGYVLAVFMMAIIILLGGGI). The Cytoplasmic segment spans residues 185-263 (TMGYFYKRGR…LMGSAGTPGA (79 aa)). The tract at residues 239-263 (NNQTPTQEPVEGADPLMGSAGTPGA) is disordered.

The protein resides in the cell membrane. Its function is as follows. Negative regulator of hepatic phosphatidylinositol 3-kinase (PI3K) activity. The polypeptide is Phosphoinositide-3-kinase-interacting protein 1 (pik3ip1) (Danio rerio (Zebrafish)).